Consider the following 366-residue polypeptide: MATTAQKIKEVEDEMAKTQKNKATAKHLGMLKAKLAKLKRELITPTGGGGGGGLGFDVARTGIGTVGFIGFPSVGKSTLMTQLTGTRSEAAAYEFTTLTTVPGVLQYNGAKIQILDLPGIIEGAKDGRGRGKQVITVARTCNLIFIVLDVLKPMSHKRIIEEELEGFGIRLNKEPPNIVFKKKERGGINITNTVPLTHIDLDEIRAVCSEYRVNSADIAFRCDATIDDLIDVLEGNRVYIPALYVLNKIDSISIEELDLIDRIPNAVPICGNRGWNIDELKETMWDYLNLVRVYTRPRGLEPDYSEPVILRTGHSTVEDFCNNIHSSIKSQFKHAYVWGKSVPYPGMRVGLSHVLLDEDVVTIVKK.

An OBG-type G domain is found at 64–289 (GTVGFIGFPS…LKETMWDYLN (226 aa)). GTP-binding positions include 70–77 (GFPSVGKS), 116–120 (DLPGI), and 247–250 (NKID). Residues 289 to 365 (NLVRVYTRPR…LDEDVVTIVK (77 aa)) enclose the TGS domain.

Belongs to the TRAFAC class OBG-HflX-like GTPase superfamily. OBG GTPase family.

This is an uncharacterized protein from Schizosaccharomyces pombe (strain 972 / ATCC 24843) (Fission yeast).